Here is a 352-residue protein sequence, read N- to C-terminus: DNA polymerase IV (352 aa).

One can recognise a UmuC domain in the interval 4-185; sequence IIHVDMDCFF…LPLSKIPGVG (182 aa). The Mg(2+) site is built by aspartate 8 and aspartate 103. The active site involves glutamate 104.

The protein belongs to the DNA polymerase type-Y family. As to quaternary structure, monomer. It depends on Mg(2+) as a cofactor.

The protein resides in the cytoplasm. It carries out the reaction DNA(n) + a 2'-deoxyribonucleoside 5'-triphosphate = DNA(n+1) + diphosphate. Functionally, poorly processive, error-prone DNA polymerase involved in untargeted mutagenesis. Copies undamaged DNA at stalled replication forks, which arise in vivo from mismatched or misaligned primer ends. These misaligned primers can be extended by PolIV. Exhibits no 3'-5' exonuclease (proofreading) activity. May be involved in translesional synthesis, in conjunction with the beta clamp from PolIII. This is DNA polymerase IV from Yersinia pestis bv. Antiqua (strain Antiqua).